Here is a 317-residue protein sequence, read N- to C-terminus: Mitochondrial thiamine pyrophosphate carrier 1 (317 aa).

6 consecutive transmembrane segments (helical) span residues 15–37 (TVSWYNSVIAGSVSGVFARMATA), 80–100 (IPATAMYVVYGAVQFGSYSWF), 118–138 (LTVGALAGMTSSVVSYPLDLL), 168–190 (GFFTGISTAMTTVTLSTAIMFLT), 205–227 (FWSRPVSASSGIIAGFVSKTMVF), and 281–300 (GLTMGLCKSVPTTAISLFVY). Solcar repeat units follow at residues 16–103 (VSWY…FNNV), 112–197 (SQQG…VNIV), and 206–306 (WSRP…TMDL).

This sequence belongs to the mitochondrial carrier (TC 2.A.29) family.

It is found in the mitochondrion inner membrane. Its function is as follows. Mitochondrial transporter that mediates uptake of thiamine pyrophosphate (ThPP) into mitochondria. This chain is Mitochondrial thiamine pyrophosphate carrier 1 (TPC1), found in Kluyveromyces lactis (strain ATCC 8585 / CBS 2359 / DSM 70799 / NBRC 1267 / NRRL Y-1140 / WM37) (Yeast).